A 484-amino-acid chain; its full sequence is Phosphoenolpyruvate carboxylase (484 aa).

The protein belongs to the PEPCase type 2 family. As to quaternary structure, homotetramer. The cofactor is Mg(2+).

It catalyses the reaction oxaloacetate + phosphate = phosphoenolpyruvate + hydrogencarbonate. Catalyzes the irreversible beta-carboxylation of phosphoenolpyruvate (PEP) to form oxaloacetate (OAA), a four-carbon dicarboxylic acid source for the tricarboxylic acid cycle. The protein is Phosphoenolpyruvate carboxylase of Methanospirillum hungatei JF-1 (strain ATCC 27890 / DSM 864 / NBRC 100397 / JF-1).